Reading from the N-terminus, the 88-residue chain is Small ribosomal subunit protein bS16 (88 aa).

The protein belongs to the bacterial ribosomal protein bS16 family.

In Geobacter metallireducens (strain ATCC 53774 / DSM 7210 / GS-15), this protein is Small ribosomal subunit protein bS16.